Reading from the N-terminus, the 181-residue chain is MASSMLSSAAVVTSPAQATMVAPFTGLKSSAAFPVTRKTNKDITSIASNGGRVSCMKVWPPIGKKKFETLSYLPDLSDVELAKEVDYLLRNKWIPCVEFELEHGFVYREHGNTPGYYDGRYWTMWKLPLFGCTDSAQVLKEVEECKKEYPGAFIRIIGFDNTRQVQCISFIAYKPPSFTEA.

Residues 1 to 54 (MASSMLSSAAVVTSPAQATMVAPFTGLKSSAAFPVTRKTNKDITSIASNGGRVS) constitute a chloroplast transit peptide.

This sequence belongs to the RuBisCO small chain family. In terms of assembly, heterohexadecamer of 8 large and 8 small subunits.

It localises to the plastid. The protein localises to the chloroplast. Its function is as follows. RuBisCO catalyzes two reactions: the carboxylation of D-ribulose 1,5-bisphosphate, the primary event in carbon dioxide fixation, as well as the oxidative fragmentation of the pentose substrate. Both reactions occur simultaneously and in competition at the same active site. Although the small subunit is not catalytic it is essential for maximal activity. The chain is Ribulose bisphosphate carboxylase small subunit 3B, chloroplastic (RBCS-3B) from Arabidopsis thaliana (Mouse-ear cress).